The following is a 74-amino-acid chain: Kappa-scoloptoxin(07)-Ssm2e (74 aa).

The signal sequence occupies residues 1–19; the sequence is MLVFYALLFVSVFSNTVMG. Residues 20 to 41 constitute a propeptide that is removed on maturation; sequence ATIDMPIPKPILREAIEEIDVN.

This sequence belongs to the scoloptoxin-07 family. Post-translationally, contains 3 disulfide bonds. Expressed by the venom gland.

It localises to the secreted. Functionally, inhibits voltage-gated potassium channels. The sequence is that of Kappa-scoloptoxin(07)-Ssm2e from Scolopendra mutilans (Chinese red-headed centipede).